Reading from the N-terminus, the 407-residue chain is Probable NADPH dehydrogenase (407 aa).

Positions 49 and 124 each coordinate FMN. 201 to 204 is a substrate binding site; it reads HGAH. The active-site Proton donor is the Tyr-206. Residues Arg-254 and Arg-357 each coordinate FMN.

Belongs to the NADH:flavin oxidoreductase/NADH oxidase family. FMN serves as cofactor.

The enzyme catalyses A + NADPH + H(+) = AH2 + NADP(+). Functionally, oxidoreductase that binds mammalian estrogens with high affinity. The polypeptide is Probable NADPH dehydrogenase (Candida albicans (Yeast)).